Here is a 380-residue protein sequence, read N- to C-terminus: Cytochrome b (380 aa).

4 consecutive transmembrane segments (helical) span residues 34–54 (FGSLLGICLLTQILTGLLLAT), 78–99 (WLIRNLHANGASFFFICIYLHI), 114–134 (WNTGIILLLTLMATAFVGYVL), and 179–199 (FFALHFLLPFMIAGLALIHLT). 2 residues coordinate heme b: His-84 and His-98. Heme b contacts are provided by His-183 and His-197. His-202 provides a ligand contact to a ubiquinone. 4 consecutive transmembrane segments (helical) span residues 227–247 (LKDILGFIIMFLPLTTLALFS), 289–309 (LGGVLALAASVLVLFLVPLLH), 321–341 (LSQFLFWTLVANLLILTWVGS), and 348–368 (FIIIGQLASLTYFTILLLLFP).

It belongs to the cytochrome b family. As to quaternary structure, the cytochrome bc1 complex contains 11 subunits: 3 respiratory subunits (MT-CYB, CYC1 and UQCRFS1), 2 core proteins (UQCRC1 and UQCRC2) and 6 low-molecular weight proteins (UQCRH/QCR6, UQCRB/QCR7, UQCRQ/QCR8, UQCR10/QCR9, UQCR11/QCR10 and a cleavage product of UQCRFS1). This cytochrome bc1 complex then forms a dimer. Requires heme b as cofactor.

It is found in the mitochondrion inner membrane. Functionally, component of the ubiquinol-cytochrome c reductase complex (complex III or cytochrome b-c1 complex) that is part of the mitochondrial respiratory chain. The b-c1 complex mediates electron transfer from ubiquinol to cytochrome c. Contributes to the generation of a proton gradient across the mitochondrial membrane that is then used for ATP synthesis. The polypeptide is Cytochrome b (MT-CYB) (Pinguinus impennis (Great auk)).